We begin with the raw amino-acid sequence, 287 residues long: Nucleotide-binding protein Pmob_0154 (287 aa).

Glycine 15–threonine 22 is a binding site for ATP. Aspartate 64–tryptophan 67 serves as a coordination point for GTP.

This sequence belongs to the RapZ-like family.

Displays ATPase and GTPase activities. The polypeptide is Nucleotide-binding protein Pmob_0154 (Petrotoga mobilis (strain DSM 10674 / SJ95)).